The sequence spans 255 residues: Indole-3-glycerol phosphate synthase (255 aa).

The protein belongs to the TrpC family.

It carries out the reaction 1-(2-carboxyphenylamino)-1-deoxy-D-ribulose 5-phosphate + H(+) = (1S,2R)-1-C-(indol-3-yl)glycerol 3-phosphate + CO2 + H2O. It participates in amino-acid biosynthesis; L-tryptophan biosynthesis; L-tryptophan from chorismate: step 4/5. This Streptococcus pneumoniae (strain 70585) protein is Indole-3-glycerol phosphate synthase.